We begin with the raw amino-acid sequence, 690 residues long: Glycine--tRNA ligase beta subunit (690 aa).

This sequence belongs to the class-II aminoacyl-tRNA synthetase family. As to quaternary structure, tetramer of two alpha and two beta subunits.

The protein localises to the cytoplasm. The enzyme catalyses tRNA(Gly) + glycine + ATP = glycyl-tRNA(Gly) + AMP + diphosphate. This is Glycine--tRNA ligase beta subunit from Pediococcus pentosaceus (strain ATCC 25745 / CCUG 21536 / LMG 10740 / 183-1w).